Consider the following 502-residue polypeptide: ATP synthase subunit alpha (502 aa).

ATP is bound at residue 169-176 (GDRQTGKT).

This sequence belongs to the ATPase alpha/beta chains family. As to quaternary structure, F-type ATPases have 2 components, CF(1) - the catalytic core - and CF(0) - the membrane proton channel. CF(1) has five subunits: alpha(3), beta(3), gamma(1), delta(1), epsilon(1). CF(0) has three main subunits: a(1), b(2) and c(9-12). The alpha and beta chains form an alternating ring which encloses part of the gamma chain. CF(1) is attached to CF(0) by a central stalk formed by the gamma and epsilon chains, while a peripheral stalk is formed by the delta and b chains.

It is found in the cell inner membrane. It catalyses the reaction ATP + H2O + 4 H(+)(in) = ADP + phosphate + 5 H(+)(out). In terms of biological role, produces ATP from ADP in the presence of a proton gradient across the membrane. The alpha chain is a regulatory subunit. In Geotalea uraniireducens (strain Rf4) (Geobacter uraniireducens), this protein is ATP synthase subunit alpha.